The chain runs to 441 residues: ATP-dependent RNA helicase sub2 (441 aa).

Low complexity predominate over residues 23 to 32 (TTAAPAANGD). A disordered region spans residues 23 to 42 (TTAAPAANGDAAKKGDLTVS). Positions 58-86 (TGFRDFLLKGELLRAITDCGFEHPSEVQQ) match the Q motif motif. In terms of domain architecture, Helicase ATP-binding spans 89-264 (IPTAILNVDV…KKFMRNPLEV (176 aa)). Residue 102–109 (AKSGLGKT) coordinates ATP. Positions 211-214 (DECD) match the DECD box motif. Residues 292–437 (KLNELLDSLE…EYPEGGVDSS (146 aa)) form the Helicase C-terminal domain.

Belongs to the DEAD box helicase family. DECD subfamily.

It localises to the nucleus. The catalysed reaction is ATP + H2O = ADP + phosphate + H(+). ATP-binding RNA helicase involved in transcription elongation and required for the export of mRNA out of the nucleus. SUB2 also plays a role in pre-mRNA splicing and spliceosome assembly. May be involved in rDNA and telomeric silencing, and maintenance of genome integrity. The protein is ATP-dependent RNA helicase sub2 (sub2) of Aspergillus oryzae (strain ATCC 42149 / RIB 40) (Yellow koji mold).